The following is a 913-amino-acid chain: MTELTFFPTDWRSEDVEPDKGEPYFRINIFGKTMDGKTVCVRAKFTPFFLLETPESWSAARTNLFITETAMKYDAIRPSCLPTKRKNMWGYDGGKMRPMVQFVFKTLSQMRKAKYRLKNEYQIYESSVDPIIRIFHLRNINPADWMHVSKAFPVETRISNSDIEVETSFQHLGPSDLKEVPPLIIASWDIETYSKDRKFPLAENPADYCIQIATTFQKYGEPEPYRRVVVCYKQTASVEGVEIISCAEEADVMNTWMTILQDEITDVSIGYNLWQYDLRYIHGRSMMCVDDITGEDNVRLKNLGRLLVGGGEVIERDLSSNAFGQNKFFLLDMPGVMQIDLLQWFRKNRNLESYSLNNVSKLYLGDQKNDLPAMQIFEKFEGGADDRAIIAAYARKDTDLPLKLLKKMAILEDITEMANAVKVPVDYINFRGQQVRAFSCLVGKARQMNYAIPDDKMWTVDGKYEGATVLDAKKGAYFTSIAALDFASLYPSIIRAHNMSPETLVMDKRFENLPGIEYYEIETGLGTFKYPQKNDETGEGQGVVPALLDDLAKFRKQAKKHMAEAKKNDDEFREALYDAQQRSYKIVMNSVYGFLGASRGFIPCVPIAASVTATGRKMIEHTAKRVTELLPGSEVIYGDTDSVMIRMKLPDDKIHDMDEQFKMAKWLAGEITKDFKAPNDLEFEKIYYPYILYSKKRYAAIKFEDPDEKGKVDVKGLALVRRDFSPITREILKESLDTILFKKDTPTAVTETVECIRKVLDNEYPMEKFTMSKTLKTGYKNECQPHLHVSNKIFERTGFPVPSGARVPFVYIEDKKNLDTKQSFRAEDPTFAQENDLIVDRLFYIEHQLMKPICSLFEPLLDDPETEIFGHPLIKGKIDELKSTFKADLRDAKRTKKNIANNQREITSFFKKK.

The segment at 182-401 (PLIIASWDIE…AYARKDTDLP (220 aa)) is contains conserved residues essential for 3' -&gt; 5' exonuclease activities.

Belongs to the DNA polymerase type-B family.

It catalyses the reaction DNA(n) + a 2'-deoxyribonucleoside 5'-triphosphate = DNA(n+1) + diphosphate. In terms of biological role, in addition to polymerase activity, this DNA polymerase potentially exhibits 3' to 5' exonuclease activity. This chain is DNA polymerase (DPO), found in Chlorella (PBCV-NY2A).